The sequence spans 258 residues: Homeobox-leucine zipper protein ATHB-7 (258 aa).

The homeobox DNA-binding region spans 29-88 (NKNNQRRFSDEQIKSLEMMFESETRLEPRKKVQLARELGLQPRQVAIWFQNKRARWKSKQ). The leucine-zipper stretch occupies residues 89 to 124 (LETEYNILRQNYDNLASQFESLKKEKQALVSELQRL). The segment at 149-183 (SSTHHESENEENRRRKPEEVRPEMEMKDDKGHHGV) is disordered. A compositionally biased stretch (basic and acidic residues) spans 151–183 (THHESENEENRRRKPEEVRPEMEMKDDKGHHGV).

Belongs to the HD-ZIP homeobox family. Class I subfamily. In terms of assembly, interacts with TBP2 and TFIIB1. As to expression, widely expressed.

It localises to the nucleus. Probable transcription activator that may act as growth regulators in response to water deficit. This chain is Homeobox-leucine zipper protein ATHB-7 (ATHB-7), found in Arabidopsis thaliana (Mouse-ear cress).